A 302-amino-acid chain; its full sequence is 4-hydroxy-tetrahydrodipicolinate synthase (302 aa).

Thr55 contributes to the pyruvate binding site. The Proton donor/acceptor role is filled by Tyr144. Residue Lys172 is the Schiff-base intermediate with substrate of the active site. Val214 provides a ligand contact to pyruvate.

This sequence belongs to the DapA family. Homotetramer; dimer of dimers.

Its subcellular location is the cytoplasm. The catalysed reaction is L-aspartate 4-semialdehyde + pyruvate = (2S,4S)-4-hydroxy-2,3,4,5-tetrahydrodipicolinate + H2O + H(+). The protein operates within amino-acid biosynthesis; L-lysine biosynthesis via DAP pathway; (S)-tetrahydrodipicolinate from L-aspartate: step 3/4. Catalyzes the condensation of (S)-aspartate-beta-semialdehyde [(S)-ASA] and pyruvate to 4-hydroxy-tetrahydrodipicolinate (HTPA). This Synechococcus sp. (strain CC9311) protein is 4-hydroxy-tetrahydrodipicolinate synthase.